The chain runs to 199 residues: Nuclear transcription factor Y subunit C-2 (199 aa).

It belongs to the NFYC/HAP5 subunit family. As to quaternary structure, heterotrimeric transcription factor composed of three components, NF-YA, NF-YB and NF-YC. NF-YB and NF-YC must interact and dimerize for NF-YA association and DNA binding. Interacts with HTT1 in both cytoplasm and nucleus. Ubiquitous.

Its subcellular location is the nucleus. The protein localises to the cytoplasm. In terms of biological role, stimulates the transcription of various genes by recognizing and binding to a CCAAT motif in promoters. The polypeptide is Nuclear transcription factor Y subunit C-2 (NFYC2) (Arabidopsis thaliana (Mouse-ear cress)).